The primary structure comprises 694 residues: Elongation factor G (694 aa).

The tr-type G domain occupies 6–288 (KLYRNIGIAA…GVIEYLPSPT (283 aa)). Residues 15 to 22 (AHVDAGKT), 86 to 90 (DTPGH), and 140 to 143 (NKMD) contribute to the GTP site.

This sequence belongs to the TRAFAC class translation factor GTPase superfamily. Classic translation factor GTPase family. EF-G/EF-2 subfamily.

It localises to the cytoplasm. In terms of biological role, catalyzes the GTP-dependent ribosomal translocation step during translation elongation. During this step, the ribosome changes from the pre-translocational (PRE) to the post-translocational (POST) state as the newly formed A-site-bound peptidyl-tRNA and P-site-bound deacylated tRNA move to the P and E sites, respectively. Catalyzes the coordinated movement of the two tRNA molecules, the mRNA and conformational changes in the ribosome. The sequence is that of Elongation factor G from Legionella pneumophila (strain Corby).